A 418-amino-acid chain; its full sequence is UDP-N-acetylglucosamine 1-carboxyvinyltransferase 1 (418 aa).

Residue Lys-22–Asn-23 coordinates phosphoenolpyruvate. Residue Arg-94 coordinates UDP-N-acetyl-alpha-D-glucosamine. Cys-118 serves as the catalytic Proton donor. Residue Cys-118 is modified to 2-(S-cysteinyl)pyruvic acid O-phosphothioketal. UDP-N-acetyl-alpha-D-glucosamine is bound by residues Arg-123–Leu-127, Asp-306, and Ile-328.

The protein belongs to the EPSP synthase family. MurA subfamily.

The protein resides in the cytoplasm. It carries out the reaction phosphoenolpyruvate + UDP-N-acetyl-alpha-D-glucosamine = UDP-N-acetyl-3-O-(1-carboxyvinyl)-alpha-D-glucosamine + phosphate. It functions in the pathway cell wall biogenesis; peptidoglycan biosynthesis. Cell wall formation. Adds enolpyruvyl to UDP-N-acetylglucosamine. The protein is UDP-N-acetylglucosamine 1-carboxyvinyltransferase 1 of Clostridium acetobutylicum (strain ATCC 824 / DSM 792 / JCM 1419 / IAM 19013 / LMG 5710 / NBRC 13948 / NRRL B-527 / VKM B-1787 / 2291 / W).